Here is a 391-residue protein sequence, read N- to C-terminus: Ectodysplasin-A (391 aa).

A compositionally biased stretch (basic and acidic residues) spans 1–21 (MGYPEVERREPLPAAAPRERG). Residues 1 to 28 (MGYPEVERREPLPAAAPRERGSQGCGCR) are disordered. The Cytoplasmic segment spans residues 1-41 (MGYPEVERREPLPAAAPRERGSQGCGCRGAPARAGEGNSCR). A helical; Signal-anchor for type II membrane protein transmembrane segment spans residues 42–62 (LFLGFFGLSLALHLLTLCCYL). The Extracellular segment spans residues 63–391 (ELRSELRRER…AIRLGEAPAS (329 aa)). Disordered stretches follow at residues 73-130 (GAES…SQDG) and 145-245 (SYSE…GTRE). The segment covering 76-96 (SRFSGPGTPGTSGTLSSPGGL) has biased composition (low complexity). Residues 180–229 (GPPGPNGPPGPPGPPGPQGPPGIPGIPGIPGTTVMGPPGPPGPPGPQGPP) form the Collagen-like domain. 2 stretches are compositionally biased toward pro residues: residues 181–203 (PPGP…PGIP) and 216–228 (PPGP…PQGP). The region spanning 249 to 385 (AVVHLQGQGS…HTTFFGAIRL (137 aa)) is the THD domain. Asn-313 carries an N-linked (GlcNAc...) asparagine glycan. A disulfide bridge connects residues Cys-332 and Cys-346. A glycan (N-linked (GlcNAc...) asparagine) is linked at Asn-372.

It belongs to the tumor necrosis factor family. As to quaternary structure, homotrimer. The homotrimers may then dimerize and form higher-order oligomers. N-glycosylated. Post-translationally, processing by furin produces a secreted form.

It is found in the cell membrane. It localises to the secreted. Its function is as follows. Cytokine which is involved in epithelial-mesenchymal signaling during morphogenesis of ectodermal organs. Functions as a ligand activating the DEATH-domain containing receptors EDAR and EDA2R. Isoform A1 binds only to the receptor EDAR, while isoform A2 binds exclusively to the receptor EDA2R. May also play a role in cell adhesion. In terms of biological role, isoform A1 binds only to the receptor EDAR, while isoform A2 binds exclusively to the receptor EDA2R. Isoform A2 binds exclusively to the receptor EDA2R. In Bos taurus (Bovine), this protein is Ectodysplasin-A (EDA).